Reading from the N-terminus, the 189-residue chain is MKKIGIIGGTFDPPHYGHLLIANEVYHTLELDEVWFLPNQIPPHKRNRNVTSAEDRRKMLELAIEKEGYFSLCLEELEREGPSYTYDTMLQLTKKHPDTTFYFIIGGDMVEYLPKWYNIEKLLELVTFVGVARPGYTLQTPYKILTIEIPEFAVSSSLLRERYKNKKTCKYLLPEQVQSYIERNGLYES.

The protein belongs to the NadD family.

It catalyses the reaction nicotinate beta-D-ribonucleotide + ATP + H(+) = deamido-NAD(+) + diphosphate. Its pathway is cofactor biosynthesis; NAD(+) biosynthesis; deamido-NAD(+) from nicotinate D-ribonucleotide: step 1/1. Its function is as follows. Catalyzes the reversible adenylation of nicotinate mononucleotide (NaMN) to nicotinic acid adenine dinucleotide (NaAD). This chain is Probable nicotinate-nucleotide adenylyltransferase, found in Bacillus cytotoxicus (strain DSM 22905 / CIP 110041 / 391-98 / NVH 391-98).